We begin with the raw amino-acid sequence, 693 residues long: Elongation factor G (693 aa).

Positions 8–282 (EKTRNIGIMA…AVIDYLPSPL (275 aa)) constitute a tr-type G domain. GTP is bound by residues 17–24 (AHVDAGKT), 81–85 (DTPGH), and 135–138 (NKMD).

It belongs to the TRAFAC class translation factor GTPase superfamily. Classic translation factor GTPase family. EF-G/EF-2 subfamily.

It is found in the cytoplasm. Its function is as follows. Catalyzes the GTP-dependent ribosomal translocation step during translation elongation. During this step, the ribosome changes from the pre-translocational (PRE) to the post-translocational (POST) state as the newly formed A-site-bound peptidyl-tRNA and P-site-bound deacylated tRNA move to the P and E sites, respectively. Catalyzes the coordinated movement of the two tRNA molecules, the mRNA and conformational changes in the ribosome. The polypeptide is Elongation factor G (Streptococcus pneumoniae (strain CGSP14)).